Consider the following 546-residue polypeptide: Probable E3 ubiquitin-protein ligase NGR_a03640 (546 aa).

The segment at Met-1 to Ala-70 is disordered. The segment at Met-1–Met-248 is interaction with target proteins. Residues Ser-22–Ser-48 are compositionally biased toward low complexity. A compositionally biased stretch (basic and acidic residues) spans Ala-58–Pro-67. LRR repeat units follow at residues Gly-104–Thr-125, Leu-126–Ala-144, Gly-145–Ala-166, Leu-167–Pro-186, and Glu-187–Gln-208. The segment at Gly-249–Arg-256 is linker. The NEL domain maps to Pro-257–Leu-546. The E3 ubiquitin-protein ligase catalytic domain stretch occupies residues Pro-257–Leu-546. Residue Cys-338 is the Glycyl thioester intermediate of the active site.

This sequence belongs to the LRR-containing bacterial E3 ligase family. In terms of processing, ubiquitinated in the presence of host E1 ubiquitin-activating enzyme, E2 ubiquitin-conjugating enzyme and ubiquitin.

It is found in the secreted. The protein resides in the host cytoplasm. Its function is as follows. Effector proteins function to alter host cell physiology and promote bacterial survival in host tissues. This protein is an E3 ubiquitin ligase that interferes with host's ubiquitination pathway. The protein is Probable E3 ubiquitin-protein ligase NGR_a03640 of Sinorhizobium fredii (strain NBRC 101917 / NGR234).